The sequence spans 454 residues: uncharacterized protein (454 aa).

The TRAM domain maps to 1 to 45 (MAAEGKAIAKVNDLVIFVPYVVPGDVVDLQIKRKKNKYAEAEAVK). Residues Cys58, Cys64, Cys67, and Cys160 each coordinate [4Fe-4S] cluster. Positions 286, 315, 336, and 385 each coordinate S-adenosyl-L-methionine. Cys412 (nucleophile) is an active-site residue.

The protein belongs to the class I-like SAM-binding methyltransferase superfamily. RNA M5U methyltransferase family.

This is an uncharacterized protein from Bacteroides thetaiotaomicron (strain ATCC 29148 / DSM 2079 / JCM 5827 / CCUG 10774 / NCTC 10582 / VPI-5482 / E50).